A 477-amino-acid chain; its full sequence is MKSLPILLLLCVAVCSAYPLDGAARGEDTSMNLVQKYLENYYDLKKDVKQFVRRKDSGPVVKKIREMQKFLGLEVTGKLDSDTLEVMRKPRCGVPDVGHFRTFPGIPKWRKTHLTYRIVNYTPDLPKDAVDSAVEKALKVWEEVTPLTFSRLYEGEADIMISFAVREHGDFYPFDGPGNVLAHAYAPGPGINGDAHFDDDEQWTKDTTGTNLFLVAAHEIGHSLGLFHSANTEALMYPLYHSLTDLTRFRLSQDDINGIQSLYGPPPDSPETPLVPTEPVPPEPGTPANCDPALSFDAVSTLRGEILIFKDRHFWRKSLRKLEPELHLISSFWPSLPSGVDAAYEVTSKDLVFIFKGNQFWAIRGNEVRAGYPRGIHTLGFPPTVRKIDAAISDKEKNKTYFFVEDKYWRFDEKRNSMEPGFPKQIAEDFPGIDSKIDAVFEEFGFFYFFTGSSQLEFDPNAKKVTHTLKSNSWLNC.

Positions 1-17 (MKSLPILLLLCVAVCSA) are cleaved as a signal peptide. The propeptide at 18-99 (YPLDGAARGE…PRCGVPDVGH (82 aa)) is activation peptide. The short motif at 90–97 (PRCGVPDV) is the Cysteine switch element. Zn(2+) is bound at residue C92. Ca(2+) contacts are provided by D124 and D158. 2 residues coordinate Zn(2+): H168 and D170. D175, G176, G178, and V180 together coordinate Ca(2+). Residue H183 participates in Zn(2+) binding. The Ca(2+) site is built by G190, N192, and D194. Position 196 (H196) interacts with Zn(2+). Residues D198, D199, and E201 each contribute to the Ca(2+) site. Residue H218 participates in Zn(2+) binding. Residue E219 is part of the active site. Zn(2+) is bound by residues H222 and H228. Positions 262–287 (LYGPPPDSPETPLVPTEPVPPEPGTP) are disordered. Residues 276–285 (PTEPVPPEPG) are compositionally biased toward pro residues. Hemopexin repeat units follow at residues 287 to 336 (PANC…WPSL), 337 to 383 (PSGV…GFPP), 385 to 433 (VRKI…FPGI), and 434 to 477 (DSKI…WLNC). A disulfide bridge connects residues C290 and C477. Position 297 (D297) interacts with Ca(2+). The Ca(2+) site is built by D389 and D438.

This sequence belongs to the peptidase M10A family. Requires Ca(2+) as cofactor. It depends on Zn(2+) as a cofactor. In terms of processing, directly cleaved by HTRA2 to produce active form.

It is found in the secreted. Its subcellular location is the extracellular space. The protein resides in the extracellular matrix. It localises to the nucleus. The protein localises to the cytoplasm. The catalysed reaction is Preferential cleavage where P1', P2' and P3' are hydrophobic residues.. Enzymatic activity is activated by HTRA2 in dopaminergic cells upon mitochondrial stress. Functionally, metalloproteinase with a rather broad substrate specificity that can degrade fibronectin, laminin, gelatins of type I, III, IV, and V; collagens III, IV, X, and IX, and cartilage proteoglycans. Activates different molecules including growth factors, plasminogen or other matrix metalloproteinases such as MMP9. Once released into the extracellular matrix (ECM), the inactive pro-enzyme is activated by the plasmin cascade signaling pathway. Also acts intracellularly. For example, in dopaminergic neurons, gets activated by the serine protease HTRA2 upon stress and plays a pivotal role in DA neuronal degeneration by mediating microglial activation and alpha-synuclein/SNCA cleavage. In addition, plays a role in immune response and possesses antiviral activity against various viruses such as vesicular stomatitis virus, influenza A virus (H1N1) and human herpes virus 1. Mechanistically, translocates from the cytoplasm into the cell nucleus upon virus infection to influence NF-kappa-B activities. The polypeptide is Stromelysin-1 (MMP3) (Homo sapiens (Human)).